The sequence spans 304 residues: Sulfate adenylyltransferase subunit 2 1 (304 aa).

This sequence belongs to the PAPS reductase family. CysD subfamily. As to quaternary structure, heterodimer composed of CysD, the smaller subunit, and CysN.

The enzyme catalyses sulfate + ATP + H(+) = adenosine 5'-phosphosulfate + diphosphate. Its pathway is sulfur metabolism; hydrogen sulfide biosynthesis; sulfite from sulfate: step 1/3. In terms of biological role, with CysN forms the ATP sulfurylase (ATPS) that catalyzes the adenylation of sulfate producing adenosine 5'-phosphosulfate (APS) and diphosphate, the first enzymatic step in sulfur assimilation pathway. APS synthesis involves the formation of a high-energy phosphoric-sulfuric acid anhydride bond driven by GTP hydrolysis by CysN coupled to ATP hydrolysis by CysD. This Marinobacter nauticus (strain ATCC 700491 / DSM 11845 / VT8) (Marinobacter aquaeolei) protein is Sulfate adenylyltransferase subunit 2 1.